The chain runs to 233 residues: Small ribosomal subunit protein eS4 (233 aa).

The 63-residue stretch at 37-99 (VPLVVVLRDV…RDEYYRVFPD (63 aa)) folds into the S4 RNA-binding domain.

The protein belongs to the eukaryotic ribosomal protein eS4 family.

This is Small ribosomal subunit protein eS4 from Halobacterium salinarum (strain ATCC 29341 / DSM 671 / R1).